The chain runs to 96 residues: Putative regulatory protein DET0036 (96 aa).

Belongs to the RemA family.

This is Putative regulatory protein DET0036 from Dehalococcoides mccartyi (strain ATCC BAA-2266 / KCTC 15142 / 195) (Dehalococcoides ethenogenes (strain 195)).